The chain runs to 166 residues: Transmembrane protein 190 (166 aa).

The signal sequence occupies residues 1–21 (MVGSGISALGLLLLMQGSVDA). The Extracellular segment spans residues 22 to 81 (NGIQGFFYPWSCEGDVWDRESCGGQAAIENPNLCLRLRCCYRDGVCYHQRPDENMRRKHM). In terms of domain architecture, P-type spans 31 to 71 (WSCEGDVWDRESCGGQAAIENPNLCLRLRCCYRDGVCYHQR). Cystine bridges form between Cys33/Cys61, Cys43/Cys60, and Cys55/Cys67. The helical transmembrane segment at 82–102 (WALGWTCGSLLFLITSICLFW) threads the bilayer. The Cytoplasmic segment spans residues 103–166 (WARRQDMLHL…VSGEDTGGEE (64 aa)). The tract at residues 130–166 (LSKDRRSANKSTTVLQSPGGEVETAAAVSGEDTGGEE) is disordered.

Detected in testis and in a mixture of spermatogenic cells at various stages (testicular germ cells). Not detected in heart, brain, spleen, lung, liver, skeletal muscle and kidney.

The protein resides in the membrane. This is Transmembrane protein 190 (Tmem190) from Mus musculus (Mouse).